We begin with the raw amino-acid sequence, 248 residues long: Triosephosphate isomerase (248 aa).

Residue asparagine 9–lysine 11 coordinates substrate. Histidine 92 serves as the catalytic Electrophile. Residue glutamate 164 is the Proton acceptor of the active site. Residues glycine 170, serine 210, and glycine 231–glycine 232 each bind substrate.

The protein belongs to the triosephosphate isomerase family. Homodimer.

The protein localises to the cytoplasm. It carries out the reaction D-glyceraldehyde 3-phosphate = dihydroxyacetone phosphate. It participates in carbohydrate biosynthesis; gluconeogenesis. Its pathway is carbohydrate degradation; glycolysis; D-glyceraldehyde 3-phosphate from glycerone phosphate: step 1/1. Involved in the gluconeogenesis. Catalyzes stereospecifically the conversion of dihydroxyacetone phosphate (DHAP) to D-glyceraldehyde-3-phosphate (G3P). The protein is Triosephosphate isomerase of Mycoplasma capricolum subsp. capricolum (strain California kid / ATCC 27343 / NCTC 10154).